The chain runs to 273 residues: Probable nicotinate-nucleotide pyrophosphorylase [carboxylating] (273 aa).

Residues Arg-91, 124-126 (TRK), Arg-148, Lys-158, Glu-188, Asp-209, 235-237 (SGN), and 256-258 (VGA) contribute to the substrate site.

The protein belongs to the NadC/ModD family. As to quaternary structure, hexamer formed by 3 homodimers.

It carries out the reaction nicotinate beta-D-ribonucleotide + CO2 + diphosphate = quinolinate + 5-phospho-alpha-D-ribose 1-diphosphate + 2 H(+). It functions in the pathway cofactor biosynthesis; NAD(+) biosynthesis; nicotinate D-ribonucleotide from quinolinate: step 1/1. In terms of biological role, involved in the catabolism of quinolinic acid (QA). The chain is Probable nicotinate-nucleotide pyrophosphorylase [carboxylating] (nadC) from Helicobacter pylori (strain ATCC 700392 / 26695) (Campylobacter pylori).